A 400-amino-acid chain; its full sequence is MLDPFGKRAESLIREEFGDLLALLERVPSAISVEEPISLVSWMLESENPPQELVEVDNLEELRDLFKFYALLGAASISPYGLEAEVVKRATLRLYSERIKASKNLSETMLPVVPVGENEIPHNDLNILERRMDRNLSPEEKEKLKIKYKIPIKDLLNLWGSSLKEVYIRNGYAYLRWETALKMWEKAFEKRFERAVNILYEYRDELPEFYHRLREKLEEIAEEYFKERGEMFKGTASPLRFDLFPPCVKEALKGVPAGMRNYAITVLLTSFLSYARICPNPPKKDVRIKDCINDLKIIEEEILPVIIEAGNRCKPPLFEDQPHEIKNIWYHLGFGLTDSPTMEDSGNSTWYFPPNCDKIRANAPQLCKPDKYCRGIKNPLSYYLKRLYLEGKKKEGETSE.

Positions 247, 356, 367, and 373 each coordinate [4Fe-4S] cluster.

This sequence belongs to the eukaryotic-type primase large subunit family. In terms of assembly, heterodimer of a small subunit (PriS) and a large subunit (PriL). It depends on [4Fe-4S] cluster as a cofactor.

In terms of biological role, regulatory subunit of DNA primase, an RNA polymerase that catalyzes the synthesis of short RNA molecules used as primers for DNA polymerase during DNA replication. Stabilizes and modulates the activity of the small subunit, increasing the rate of DNA synthesis, and conferring RNA synthesis capability. The DNA polymerase activity may enable DNA primase to also catalyze primer extension after primer synthesis. May also play a role in DNA repair. The sequence is that of DNA primase large subunit PriL from Thermococcus kodakarensis (strain ATCC BAA-918 / JCM 12380 / KOD1) (Pyrococcus kodakaraensis (strain KOD1)).